A 479-amino-acid chain; its full sequence is U2 small nuclear ribonucleoprotein auxiliary factor 35 kDa subunit-related protein 1 (479 aa).

Positions 1–63 (MAALEKMTFP…EDTFIEEQQL (63 aa)) are disordered. Basic residues predominate over residues 20–37 (SHKKYRAALKKEKRKKRR). Residues 50 to 63 (QEEEEDTFIEEQQL) show a composition bias toward acidic residues. Lysine 67 participates in a covalent cross-link: Glycyl lysine isopeptide (Lys-Gly) (interchain with G-Cter in SUMO2). Residues 171-199 (EKDRANCPFYSKTGACRFGDRCSRKHNFP) form a C3H1-type 1 zinc finger. Residues 203–309 (PTLLIKSMFT…RQLQCEFCPV (107 aa)) enclose the RRM domain. Residues 311-338 (RWKMAICGLFEIQQCPRGKHCNFLHVFR) form a C3H1-type 2 zinc finger. The residue at position 354 (serine 354) is a Phosphoserine. The tract at residues 356–479 (DQTGSSFGKN…DRTVQSPQSK (124 aa)) is disordered. 2 stretches are compositionally biased toward basic and acidic residues: residues 365–379 (NSERREKMGHHDHYY) and 388–403 (PSPDHTYKRNGESERK). At serine 389 the chain carries Phosphoserine. Composition is skewed to basic residues over residues 404-417 (KSSHRGKKSHKRTS) and 442-451 (SQSRRSHRSR).

The protein resides in the nucleus. In Homo sapiens (Human), this protein is U2 small nuclear ribonucleoprotein auxiliary factor 35 kDa subunit-related protein 1.